The primary structure comprises 82 residues: Diphthamide biosynthesis protein 3 (82 aa).

The DPH-type MB domain occupies 8 to 64; the sequence is IYDEVEIEDMTYDPALQTYSYPCPCGDKFEIALADLQDGQDIAVCPSCSLMVRVIFE. 4 residues coordinate Fe cation: Cys-30, Cys-32, Cys-52, and Cys-55.

This sequence belongs to the DPH3 family. As to quaternary structure, component of the 2-(3-amino-3-carboxypropyl)histidine synthase complex composed of dph-1, dph-2, dph-3 and a NADH-dependent reductase, predominantly cbr-1. The cofactor is Fe(2+).

Its subcellular location is the cytoplasm. It localises to the nucleus. The catalysed reaction is [3Fe-4S](1+)-[protein] + Fe(2+)-[Dph3] = [3Fe-4S](0)-[protein] + Fe(3+)-[Dph3]. It carries out the reaction 2 [3Fe-4S](0)-[protein] + 2 Fe(2+)-[Dph3] + NADH = 2 [4Fe-4S](1+)-[protein] + 2 [Dph3] + NAD(+) + H(+). It functions in the pathway protein modification; peptidyl-diphthamide biosynthesis. Functionally, required for the first step of diphthamide biosynthesis, a post-translational modification of histidine which occurs in elongation factor 2. Dph-1 and dph-2 transfer a 3-amino-3-carboxypropyl (ACP) group from S-adenosyl-L-methionine (SAM) to a histidine residue, the reaction is assisted by a reduction system comprising dph-3 and a NADH-dependent reductase, predominantly cbr-1. Acts as an electron donor to reduce the Fe-S cluster in dph1-dph2 keeping the [4Fe-4S] clusters in the active and reduced state. Restores iron to dph-1-dph-2 iron-sulfur clusters which have degraded from [4Fe-4S] to [3Fe-4S] by donating an iron atom to reform [4Fe-4S] clusters, in a manner dependent on the presence of elongation factor 2 and SAM. Associates with the elongator complex and is required for tRNA Wobble base modifications mediated by the elongator complex. The elongator complex is required for multiple tRNA modifications, including mcm5U (5-methoxycarbonylmethyl uridine), mcm5s 2U (5-methoxycarbonylmethyl-2-thiouridine), and ncm5U (5-carbamoylmethyl uridine). The sequence is that of Diphthamide biosynthesis protein 3 (dph-3) from Neurospora crassa (strain ATCC 24698 / 74-OR23-1A / CBS 708.71 / DSM 1257 / FGSC 987).